We begin with the raw amino-acid sequence, 267 residues long: Placental prolactin-related protein 2 (267 aa).

2 N-linked (GlcNAc...) asparagine glycosylation sites follow: N99 and N121. 2 disulfides stabilise this stretch: C126–C244 and C261–C267.

Belongs to the somatotropin/prolactin family.

The protein resides in the secreted. Placental prolactin-related proteins may play a specific role during gestation. This chain is Placental prolactin-related protein 2 (PRP2), found in Bos taurus (Bovine).